Consider the following 256-residue polypeptide: uncharacterized protein (256 aa).

29 to 36 contributes to the ATP binding site; the sequence is GDDHSGKT.

This is an uncharacterized protein from Saccharomyces cerevisiae (strain ATCC 204508 / S288c) (Baker's yeast).